Reading from the N-terminus, the 198-residue chain is Anthranilate synthase component 2 (198 aa).

In terms of domain architecture, Glutamine amidotransferase type-1 spans 2–198 (NVVVVDNYDS…GNFLDAAAAH (197 aa)). Position 57 to 59 (57 to 59 (GPG)) interacts with L-glutamine. Cys87 serves as the catalytic Nucleophile; for GATase activity. L-glutamine is bound at residue 137-138 (SL). Catalysis depends on for GATase activity residues His175 and Glu177.

In terms of assembly, heterotetramer consisting of two non-identical subunits: a beta subunit (TrpG) and a large alpha subunit (TrpE).

The catalysed reaction is chorismate + L-glutamine = anthranilate + pyruvate + L-glutamate + H(+). Its pathway is amino-acid biosynthesis; L-tryptophan biosynthesis; L-tryptophan from chorismate: step 1/5. In terms of biological role, part of a heterotetrameric complex that catalyzes the two-step biosynthesis of anthranilate, an intermediate in the biosynthesis of L-tryptophan. In the first step, the glutamine-binding beta subunit (TrpG) of anthranilate synthase (AS) provides the glutamine amidotransferase activity which generates ammonia as a substrate that, along with chorismate, is used in the second step, catalyzed by the large alpha subunit of AS (TrpE) to produce anthranilate. In the absence of TrpG, TrpE can synthesize anthranilate directly from chorismate and high concentrations of ammonia. The polypeptide is Anthranilate synthase component 2 (trpG) (Halobacterium salinarum (strain ATCC 700922 / JCM 11081 / NRC-1) (Halobacterium halobium)).